The following is a 436-amino-acid chain: 3-phosphoshikimate 1-carboxyvinyltransferase (436 aa).

3 residues coordinate 3-phosphoshikimate: Lys23, Ser24, and Arg28. Lys23 provides a ligand contact to phosphoenolpyruvate. Gly97 and Arg126 together coordinate phosphoenolpyruvate. 3-phosphoshikimate-binding residues include Ser171, Gln173, Asp323, and Lys350. Gln173 contacts phosphoenolpyruvate. Asp323 serves as the catalytic Proton acceptor. Positions 354 and 396 each coordinate phosphoenolpyruvate.

This sequence belongs to the EPSP synthase family. Monomer.

It is found in the cytoplasm. It carries out the reaction 3-phosphoshikimate + phosphoenolpyruvate = 5-O-(1-carboxyvinyl)-3-phosphoshikimate + phosphate. Its pathway is metabolic intermediate biosynthesis; chorismate biosynthesis; chorismate from D-erythrose 4-phosphate and phosphoenolpyruvate: step 6/7. Catalyzes the transfer of the enolpyruvyl moiety of phosphoenolpyruvate (PEP) to the 5-hydroxyl of shikimate-3-phosphate (S3P) to produce enolpyruvyl shikimate-3-phosphate and inorganic phosphate. This chain is 3-phosphoshikimate 1-carboxyvinyltransferase, found in Prochlorococcus marinus (strain MIT 9301).